A 243-amino-acid polypeptide reads, in one-letter code: Proteasome subunit beta 1 (243 aa).

Positions 1-14 are enriched in polar residues; the sequence is MRAPQHNSDFSRTV. Positions 1-34 are disordered; it reads MRAPQHNSDFSRTVDQLADDPNPYEPEIGSMPQN. Positions 1–48 are cleaved as a propeptide — removed in mature form; by autocatalysis; it reads MRAPQHNSDFSRTVDQLADDPNPYEPEIGSMPQNDLTRADLDNVNKTG. Thr-49 functions as the Nucleophile in the catalytic mechanism.

It belongs to the peptidase T1B family. As to quaternary structure, the 20S proteasome core is composed of 14 alpha and 14 beta subunits that assemble into four stacked heptameric rings, resulting in a barrel-shaped structure. The two inner rings, each composed of seven catalytic beta subunits, are sandwiched by two outer rings, each composed of seven alpha subunits. The catalytic chamber with the active sites is on the inside of the barrel. Has a gated structure, the ends of the cylinder being occluded by the N-termini of the alpha-subunits. Is capped at one or both ends by the proteasome regulatory ATPase, PAN.

The protein localises to the cytoplasm. The enzyme catalyses Cleavage of peptide bonds with very broad specificity.. With respect to regulation, the formation of the proteasomal ATPase PAN-20S proteasome complex, via the docking of the C-termini of PAN into the intersubunit pockets in the alpha-rings, triggers opening of the gate for substrate entry. Interconversion between the open-gate and close-gate conformations leads to a dynamic regulation of the 20S proteasome proteolysis activity. In terms of biological role, component of the proteasome core, a large protease complex with broad specificity involved in protein degradation. The protein is Proteasome subunit beta 1 of Haloterrigena turkmenica (strain ATCC 51198 / DSM 5511 / JCM 9101 / NCIMB 13204 / VKM B-1734 / 4k) (Halococcus turkmenicus).